A 122-amino-acid chain; its full sequence is Large ribosomal subunit protein uL14 (122 aa).

Belongs to the universal ribosomal protein uL14 family. Part of the 50S ribosomal subunit. Forms a cluster with proteins L3 and L19. In the 70S ribosome, L14 and L19 interact and together make contacts with the 16S rRNA in bridges B5 and B8.

Functionally, binds to 23S rRNA. Forms part of two intersubunit bridges in the 70S ribosome. This chain is Large ribosomal subunit protein uL14, found in Albidiferax ferrireducens (strain ATCC BAA-621 / DSM 15236 / T118) (Rhodoferax ferrireducens).